Here is a 335-residue protein sequence, read N- to C-terminus: Taste receptor type 2 member 119 (335 aa).

The Extracellular portion of the chain corresponds to 1–7; sequence MMEGHIL. Residues 8 to 28 form a helical membrane-spanning segment; that stretch reads FFFLVVMVQFVTGVLANGLIV. Residues 29-43 are Cytoplasmic-facing; it reads VVHAIDLIMWKKMAP. Residues 44 to 64 form a helical membrane-spanning segment; the sequence is LDLLLFCLATSRIILQLCILF. At 65–81 the chain is on the extracellular side; it reads AQLCLFSLVRHTLFEDN. An N-linked (GlcNAc...) asparagine glycan is attached at N81. The chain crosses the membrane as a helical span at residues 82–102; that stretch reads ITFVFIINELSLWFATWLGVF. Over 103–124 the chain is Cytoplasmic; the sequence is YCAKIATIPHPLFLWLKMRISR. Residues 125 to 145 form a helical membrane-spanning segment; the sequence is LVPWLILGSVLYVIITTFIHS. The Extracellular segment spans residues 146 to 176; that stretch reads RETSAILKPIFISLFPKNATQVGTGHATLLS. N163 carries N-linked (GlcNAc...) asparagine glycosylation. Residues 177–197 traverse the membrane as a helical segment; it reads VLVLGLTLPLFIFTVAVLLLI. The Cytoplasmic segment spans residues 198 to 224; sequence YSLWNYSRQMRTMVGTREYSGHAHISA. A helical membrane pass occupies residues 225–245; the sequence is MLSILSFLILYLSHYMVAVLI. Residues 246-256 lie on the Extracellular side of the membrane; that stretch reads STQVLYLGSRT. A helical membrane pass occupies residues 257–277; that stretch reads FVFCLLVIGMYPSIHSIVLIL. The Cytoplasmic portion of the chain corresponds to 278–335; the sequence is GNPKLKRNAKMFIVHCKCCHCTRAWVTSRSPRLSDLPVPPTHPSANKTSCSEACIMPS. Residues 308 to 327 are disordered; it reads PRLSDLPVPPTHPSANKTSC.

It belongs to the G-protein coupled receptor T2R family. Expressed in subsets of taste receptor cells of the tongue and palate epithelium and exclusively in gustducin-positive cells. Expressed in the duodenum, antrum and fundus (part of the stomach).

It is found in the membrane. In terms of biological role, gustducin-coupled receptor implicated in the perception of bitter compounds in the oral cavity and the gastrointestinal tract. Signals through PLCB2 and the calcium-regulated cation channel TRPM5. The sequence is that of Taste receptor type 2 member 119 (Tas2r119) from Rattus norvegicus (Rat).